A 481-amino-acid polypeptide reads, in one-letter code: 3-isopropylmalate dehydratase large subunit (481 aa).

The [4Fe-4S] cluster site is built by cysteine 357, cysteine 417, and cysteine 420. Residues 429 to 441 (SPGQRCASTSNRN) are compositionally biased toward polar residues. The segment at 429-451 (SPGQRCASTSNRNFEGRQGKGGR) is disordered.

Belongs to the aconitase/IPM isomerase family. LeuC type 1 subfamily. In terms of assembly, heterodimer of LeuC and LeuD. [4Fe-4S] cluster serves as cofactor.

It carries out the reaction (2R,3S)-3-isopropylmalate = (2S)-2-isopropylmalate. The protein operates within amino-acid biosynthesis; L-leucine biosynthesis; L-leucine from 3-methyl-2-oxobutanoate: step 2/4. Its function is as follows. Catalyzes the isomerization between 2-isopropylmalate and 3-isopropylmalate, via the formation of 2-isopropylmaleate. The polypeptide is 3-isopropylmalate dehydratase large subunit (Mycobacterium sp. (strain KMS)).